Consider the following 476-residue polypeptide: Adenosylhomocysteinase (476 aa).

Residues Thr-67, Asp-142, and Glu-202 each coordinate substrate. Residue Thr-203–Thr-205 participates in NAD(+) binding. Substrate-binding residues include Lys-232 and Asp-236. Residues Asn-237, Gly-266 to Gly-271, Glu-289, Asn-324, Ile-345 to His-347, and Asn-390 contribute to the NAD(+) site.

This sequence belongs to the adenosylhomocysteinase family. It depends on NAD(+) as a cofactor.

It localises to the cytoplasm. It catalyses the reaction S-adenosyl-L-homocysteine + H2O = L-homocysteine + adenosine. Its pathway is amino-acid biosynthesis; L-homocysteine biosynthesis; L-homocysteine from S-adenosyl-L-homocysteine: step 1/1. May play a key role in the regulation of the intracellular concentration of adenosylhomocysteine. The protein is Adenosylhomocysteinase of Synechococcus sp. (strain WH7803).